The primary structure comprises 116 residues: MSLAIDLEVKQDELIVRLSGELDHHTAENCMNKCRMCLEKRAIRHIVLNLGQLTFMDSSGLGVILGRYKQIKNVGGQMVVCAVSPAVKRLFDMSGLFKIIRVEADEQFALQALGVA.

Residues Leu-3–Leu-113 enclose the STAS domain. A Phosphoserine modification is found at Ser-58.

Belongs to the anti-sigma-factor antagonist family. Post-translationally, phosphorylated by SpoIIAB on a serine residue.

In the phosphorylated form it could act as an anti-anti-sigma factor that counteracts SpoIIAB and thus releases sigma f from inhibition. This Geobacillus stearothermophilus (Bacillus stearothermophilus) protein is Anti-sigma F factor antagonist (spoIIAA).